Here is a 129-residue protein sequence, read N- to C-terminus: Snaclec rhodocetin subunit beta (129 aa).

Residues 3–125 form the C-type lectin domain; sequence RCPTTWSASK…EEKNAFLCKF (123 aa). Intrachain disulfides connect cysteine 4–cysteine 15, cysteine 32–cysteine 123, and cysteine 98–cysteine 115.

As to quaternary structure, heterotetramer of subunit alpha, beta, gamma and delta; only the gamma and the delta subunits are disulfide-linked. Alpha-beta heterodimer and gamma-delta heterodimer associate orthogonally, giving a cruciform conformation. This heterotetramer may covalently dimerizes thanks to the gamma subunit. As to expression, expressed by the venom gland.

Its subcellular location is the secreted. Potent inhibitor of collagen-induced platelet aggregation. It acts by binding to the integrin alpha2A domain and blocks collagen binding to integrin alpha-2/beta-1 (ITGA2/ITGB1). The gamma/delta subunits mainly contribute to this activity. The polypeptide is Snaclec rhodocetin subunit beta (Calloselasma rhodostoma (Malayan pit viper)).